The primary structure comprises 224 residues: MSIRDWPAAERPREKLLEWGAASLSDAELLAIFLRTGVSGRSAVDLARHLLAQFGGLRPLLEASQALFNQQLGLGPAKFAQLQAVLEMAKRHMAERLRHDSVLESPKAVRDYLKAMLRHEPHEIFGCLFLDSRHRVLGFEALSQGTIDAAMVYPRQVVKRALAYNAAALILCHNHPSGSLEPSAADRKLTKLLQKALEVVDVRVLDHIIVGDGDPLSMAEYGWL.

One can recognise an MPN domain in the interval 102 to 224 (VLESPKAVRD…PLSMAEYGWL (123 aa)). Residues H173, H175, and D186 each contribute to the Zn(2+) site. Positions 173-186 (HNHPSGSLEPSAAD) match the JAMM motif motif.

Belongs to the UPF0758 family.

The chain is UPF0758 protein PFLU_5982 from Pseudomonas fluorescens (strain SBW25).